A 61-amino-acid chain; its full sequence is Small ribosomal subunit protein uS14B (61 aa).

Zn(2+) contacts are provided by Cys24, Cys27, Cys40, and Cys43.

It belongs to the universal ribosomal protein uS14 family. Zinc-binding uS14 subfamily. Part of the 30S ribosomal subunit. Contacts proteins S3 and S10. Zn(2+) serves as cofactor.

Functionally, binds 16S rRNA, required for the assembly of 30S particles and may also be responsible for determining the conformation of the 16S rRNA at the A site. In Staphylococcus saprophyticus subsp. saprophyticus (strain ATCC 15305 / DSM 20229 / NCIMB 8711 / NCTC 7292 / S-41), this protein is Small ribosomal subunit protein uS14B.